Consider the following 98-residue polypeptide: Ubiquitin-related modifier 1 (98 aa).

Residue Gly98 is modified to 1-thioglycine. A Glycyl lysine isopeptide (Gly-Lys) (interchain with K-? in acceptor proteins) cross-link involves residue Gly98.

This sequence belongs to the URM1 family. C-terminal thiocarboxylation occurs in 2 steps, it is first acyl-adenylated (-COAMP) via the hesA/moeB/thiF part of UBA4, then thiocarboxylated (-COSH) via the rhodanese domain of UBA4.

The protein localises to the cytoplasm. It functions in the pathway tRNA modification; 5-methoxycarbonylmethyl-2-thiouridine-tRNA biosynthesis. In terms of biological role, acts as a sulfur carrier required for 2-thiolation of mcm(5)S(2)U at tRNA wobble positions of cytosolic tRNA(Lys), tRNA(Glu) and tRNA(Gln). Serves as sulfur donor in tRNA 2-thiolation reaction by being thiocarboxylated (-COSH) at its C-terminus by the MOCS3 homolog UBA4. The sulfur is then transferred to tRNA to form 2-thiolation of mcm(5)S(2)U. Prior mcm(5) tRNA modification by the elongator complex is required for 2-thiolation. Also acts as a ubiquitin-like protein (UBL) that is covalently conjugated via an isopeptide bond to lysine residues of target proteins such as AHP1. The thiocarboxylated form serves as substrate for conjugation and oxidative stress specifically induces the formation of UBL-protein conjugates. This Candida glabrata (strain ATCC 2001 / BCRC 20586 / JCM 3761 / NBRC 0622 / NRRL Y-65 / CBS 138) (Yeast) protein is Ubiquitin-related modifier 1.